The chain runs to 185 residues: Ribosome-recycling factor (185 aa).

Positions 137–162 (DSIDKMVKDGEVGEDEGRRAEKELDD) are disordered.

The protein belongs to the RRF family.

It is found in the cytoplasm. Functionally, responsible for the release of ribosomes from messenger RNA at the termination of protein biosynthesis. May increase the efficiency of translation by recycling ribosomes from one round of translation to another. The chain is Ribosome-recycling factor from Streptomyces coelicolor (strain ATCC BAA-471 / A3(2) / M145).